The sequence spans 54 residues: Ovomucoid (54 aa).

The region spanning V4–C54 is the Kazal-like domain. Intrachain disulfides connect C6–C36, C14–C33, and C22–C54. Residue N43 is glycosylated (N-linked (GlcNAc...) asparagine).

It is found in the secreted. In Dendrocygna viduata (White-faced whistling-duck), this protein is Ovomucoid.